A 75-amino-acid chain; its full sequence is uncharacterized protein (75 aa).

The span at 1–14 (MNDNNDNNNNNKNI) shows a compositional bias: low complexity. The tract at residues 1–30 (MNDNNDNNNNNKNIDNVDDDNDDNDKGKYK) is disordered.

This is an uncharacterized protein from Dictyostelium discoideum (Social amoeba).